A 213-amino-acid chain; its full sequence is Ras-related protein Rab-25 (213 aa).

Positions 21, 24, 25, 26, 27, 38, 39, 43, and 44 each coordinate GTP. Threonine 26 contacts Mg(2+). 2 short sequence motifs (switch) span residues 35–49 (NEFSHDSRTTIGVEF) and 67–84 (DTAGLERYRAITSAYYRG). Mg(2+) is bound by residues threonine 44 and aspartate 67. GTP contacts are provided by glycine 70, asparagine 125, lysine 126, aspartate 128, alanine 156, and leucine 157. S-geranylgeranyl cysteine attachment occurs at residues cysteine 209 and cysteine 210. Cysteine 210 carries the post-translational modification Cysteine methyl ester. The propeptide at 211–213 (ISL) is removed in mature form.

The protein belongs to the small GTPase superfamily. Rab family. As to quaternary structure, interacts (GTP-bound form) with RAB11FIP1, RAB11FIP2, RAB11FIP3 and RAB11FIP4. Interacts (via the hypervariable C-terminal region) with ITGB1 (via the cytoplasmic region); the interaction is GTP-dependent. Interacts with ITGAV. Associates with the integrin alpha-V/beta-1 heterodimer. Interacts with VPS33B. The cofactor is Mg(2+).

The protein resides in the cell membrane. It is found in the cell projection. It localises to the pseudopodium membrane. Its subcellular location is the cytoplasmic vesicle. It carries out the reaction GTP + H2O = GDP + phosphate + H(+). With respect to regulation, regulated by guanine nucleotide exchange factors (GEFs) which promote the exchange of bound GDP for free GTP. Regulated by GTPase activating proteins (GAPs) which increase the GTP hydrolysis activity. Inhibited by GDP dissociation inhibitors (GDIs) which prevent Rab-GDP dissociation. Its function is as follows. The small GTPases Rab are key regulators of intracellular membrane trafficking, from the formation of transport vesicles to their fusion with membranes. Rabs cycle between an inactive GDP-bound form and an active GTP-bound form that is able to recruit to membranes different set of downstream effectors directly responsible for vesicle formation, movement, tethering and fusion. RAB25 regulates epithelial cell differentiation, proliferation and survival, thereby playing key roles in tumorigenesis. Promotes invasive migration of cells in which it functions to localize and maintain integrin alpha-V/beta-1 at the tips of extending pseudopodia. Involved in the regulation of epithelial morphogenesis through the control of CLDN4 expression and localization at tight junctions. May selectively regulate the apical recycling pathway. Together with MYO5B regulates transcytosis. The polypeptide is Ras-related protein Rab-25 (RAB25) (Canis lupus familiaris (Dog)).